A 58-amino-acid polypeptide reads, in one-letter code: Mu-diguetoxin-Dc1b (58 aa).

4 disulfide bridges follow: cysteine 12–cysteine 26, cysteine 20–cysteine 40, cysteine 25–cysteine 54, and cysteine 42–cysteine 52.

Belongs to the neurotoxin 26 (DTX) family. As to expression, expressed by the venom gland.

The protein localises to the secreted. In terms of biological role, acts by delaying the inactivation of presynaptic voltage-sensitive sodium channels (Nav). Acts against insects and cause a progressive spastic paralysis. This Diguetia canities (Desert bush spider) protein is Mu-diguetoxin-Dc1b.